A 233-amino-acid chain; its full sequence is Large ribosomal subunit protein uL1 (233 aa).

This sequence belongs to the universal ribosomal protein uL1 family. As to quaternary structure, part of the 50S ribosomal subunit.

Functionally, binds directly to 23S rRNA. The L1 stalk is quite mobile in the ribosome, and is involved in E site tRNA release. Protein L1 is also a translational repressor protein, it controls the translation of the L11 operon by binding to its mRNA. The protein is Large ribosomal subunit protein uL1 of Brucella anthropi (strain ATCC 49188 / DSM 6882 / CCUG 24695 / JCM 21032 / LMG 3331 / NBRC 15819 / NCTC 12168 / Alc 37) (Ochrobactrum anthropi).